We begin with the raw amino-acid sequence, 237 residues long: Orotidine 5'-phosphate decarboxylase (237 aa).

Substrate is bound by residues Asp10, Lys32, 59–68 (DLKLHDIPNT), Thr118, Arg180, Gln189, Gly209, and Arg210. The Proton donor role is filled by Lys61.

Belongs to the OMP decarboxylase family. Type 1 subfamily. In terms of assembly, homodimer.

The catalysed reaction is orotidine 5'-phosphate + H(+) = UMP + CO2. It functions in the pathway pyrimidine metabolism; UMP biosynthesis via de novo pathway; UMP from orotate: step 2/2. Functionally, catalyzes the decarboxylation of orotidine 5'-monophosphate (OMP) to uridine 5'-monophosphate (UMP). The sequence is that of Orotidine 5'-phosphate decarboxylase from Fusobacterium nucleatum subsp. nucleatum (strain ATCC 25586 / DSM 15643 / BCRC 10681 / CIP 101130 / JCM 8532 / KCTC 2640 / LMG 13131 / VPI 4355).